The following is a 93-amino-acid chain: Envelope small membrane protein (93 aa).

Over 1 to 11 (MMNLLNKSLEE) the chain is Virion surface. Residues 12–32 (NGSVLTAFYIFVAFVALYLLG) form a helical membrane-spanning segment. The Intravirion portion of the chain corresponds to 33-93 (RALQAFVQAA…NEFPKNGWKQ (61 aa)).

This sequence belongs to the gammacoronaviruses E protein family. Homooligomer. Interacts with the M membrane protein in the budding compartment of the host cell, which is located between endoplasmic reticulum and the Golgi complex. The cytoplasmic tails of both proteins are important for this function. Interacts with Nucleoprotein.

The protein localises to the host Golgi apparatus membrane. Plays a central role in virus morphogenesis and assembly. Acts as a viroporin and self-assembles in host membranes forming pentameric protein-lipid pores that allow ion transport. Also plays a role in the induction of apoptosis. The sequence is that of Envelope small membrane protein from Avian infectious bronchitis virus (strain Portugal/322/82) (IBV).